A 665-amino-acid chain; its full sequence is GTPase IMAP family member 8 (665 aa).

In terms of domain architecture, AIG1-type G 1 spans M8–R210. Positions G17 to S24 are G1. GTP is bound by residues G17–A25 and S38. A G2 region spans residues T44–M48. Residues D65–D68 form a G3 region. The tract at residues T134–D137 is G4. GTP contacts are provided by residues R135–D137 and N170. The G5 stretch occupies residues N169–K171. Residues E217–S246 form a disordered region. Residues E222 to Q233 show a composition bias toward basic and acidic residues. A compositionally biased stretch (polar residues) spans L234–S246. 2 consecutive AIG1-type G domains span residues T245 to E435 and K436 to I644. Coiled coils occupy residues N400–G427 and Q608–L657.

It belongs to the TRAFAC class TrmE-Era-EngA-EngB-Septin-like GTPase superfamily. AIG1/Toc34/Toc159-like paraseptin GTPase family. IAN subfamily. Expressed in the spleen, intestine, liver, and colon, as well as in lung, placenta, kidney, muscle, and heart. Extremely low expression, if any, in brain, in thymus, bone marrow, and blood leukocytes. Detected in T-cells.

The protein localises to the endoplasmic reticulum. It is found in the golgi apparatus. Its subcellular location is the mitochondrion. It localises to the cytoplasm. The protein resides in the cytosol. Exerts an anti-apoptotic effect in the immune system and is involved in responses to infections. This chain is GTPase IMAP family member 8 (GIMAP8), found in Homo sapiens (Human).